The chain runs to 168 residues: 2-C-methyl-D-erythritol 2,4-cyclodiphosphate synthase (168 aa).

Residues D11 and H13 each coordinate a divalent metal cation. 4-CDP-2-C-methyl-D-erythritol 2-phosphate contacts are provided by residues 11 to 13 (DVH) and 38 to 39 (HS). H46 is an a divalent metal cation binding site. 4-CDP-2-C-methyl-D-erythritol 2-phosphate contacts are provided by residues 60–62 (DIG), 133–136 (TTTD), F140, and R143.

This sequence belongs to the IspF family. As to quaternary structure, homotrimer. A divalent metal cation is required as a cofactor.

The enzyme catalyses 4-CDP-2-C-methyl-D-erythritol 2-phosphate = 2-C-methyl-D-erythritol 2,4-cyclic diphosphate + CMP. Its pathway is isoprenoid biosynthesis; isopentenyl diphosphate biosynthesis via DXP pathway; isopentenyl diphosphate from 1-deoxy-D-xylulose 5-phosphate: step 4/6. Its function is as follows. Involved in the biosynthesis of isopentenyl diphosphate (IPP) and dimethylallyl diphosphate (DMAPP), two major building blocks of isoprenoid compounds. Catalyzes the conversion of 4-diphosphocytidyl-2-C-methyl-D-erythritol 2-phosphate (CDP-ME2P) to 2-C-methyl-D-erythritol 2,4-cyclodiphosphate (ME-CPP) with a corresponding release of cytidine 5-monophosphate (CMP). The protein is 2-C-methyl-D-erythritol 2,4-cyclodiphosphate synthase of Cutibacterium acnes (strain DSM 16379 / KPA171202) (Propionibacterium acnes).